A 379-amino-acid polypeptide reads, in one-letter code: CCN family member 1 (379 aa).

Residues 1–24 (MSSSTIKTLAVAVTLLHLTRLALS) form the signal peptide. Residues 25–94 (TCPAACHCPL…TALKGICRAQ (70 aa)) enclose the IGFBP N-terminal domain. 6 cysteine pairs are disulfide-bonded: C26–C50, C30–C52, C32–C53, C39–C56, C64–C78, and C70–C91. Positions 98–164 (RPCEYNSRIY…GQCCEEWVCD (67 aa)) constitute a VWFC domain. Residue S184 is modified to Phosphoserine. The TSP type-1 domain maps to 226 to 271 (KCIVQTTSWSQCSKSCGTGISTRVTNDNSECRLVKETRICEVRPCG). Residues 277 to 313 (SLKKGKKCSKTKKSPEPVRFTYAGCSSVKKYRPKYCG) are heparin-binding. 5 cysteine pairs are disulfide-bonded: C284/C321, C301/C335, C312/C351, C315/C353, and C320/C357. Residues 284–358 (CSKTKKSPEP…QSCKCNYNCP (75 aa)) form the CTCK domain.

The protein belongs to the CCN family. As to quaternary structure, interaction with integrins is heparin- and cell-type-dependent and promotes cell adhesion.

It is found in the secreted. In terms of biological role, promotes cell proliferation, chemotaxis, angiogenesis and cell adhesion. Appears to play a role in wound healing by up-regulating, in skin fibroblasts, the expression of a number of genes involved in angiogenesis, inflammation and matrix remodeling including VEGA-A, VEGA-C, MMP1, MMP3, TIMP1, uPA, PAI-1 and integrins alpha-3 and alpha-5. CCN1-mediated gene regulation is dependent on heparin-binding. Down-regulates the expression of alpha-1 and alpha-2 subunits of collagen type-1. Promotes cell adhesion and adhesive signaling through integrin alpha-6/beta-1, cell migration through integrin alpha-1/beta-5 and cell proliferation through integrin alpha-v/beta-3. The chain is CCN family member 1 from Rattus norvegicus (Rat).